We begin with the raw amino-acid sequence, 274 residues long: Elongation factor Ts (274 aa).

Positions 79–82 are involved in Mg(2+) ion dislocation from EF-Tu; the sequence is TDFV.

The protein belongs to the EF-Ts family.

The protein resides in the cytoplasm. In terms of biological role, associates with the EF-Tu.GDP complex and induces the exchange of GDP to GTP. It remains bound to the aminoacyl-tRNA.EF-Tu.GTP complex up to the GTP hydrolysis stage on the ribosome. In Azobacteroides pseudotrichonymphae genomovar. CFP2, this protein is Elongation factor Ts.